Here is a 119-residue protein sequence, read N- to C-terminus: MKRVAFVFSSAPHGSAAGREGLDALLATSALTDDIGVFFVGDGVFQLLPEQRPGAVLARDYIATFKLLSLYDIDQCWLCADSARERGLDPATPWVVDVECLAPDALRARLHEFDVILRF.

Belongs to the DsrF/TusC family. Heterohexamer, formed by a dimer of trimers. The hexameric TusBCD complex contains 2 copies each of TusB, TusC and TusD. The TusBCD complex interacts with TusE.

It localises to the cytoplasm. Its function is as follows. Part of a sulfur-relay system required for 2-thiolation of 5-methylaminomethyl-2-thiouridine (mnm(5)s(2)U) at tRNA wobble positions. This Klebsiella pneumoniae subsp. pneumoniae (strain ATCC 700721 / MGH 78578) protein is Protein TusC.